The following is a 566-amino-acid chain: Cytokine-like nuclear factor N-PAC (566 aa).

The region spanning 9–70 (VNDLVWAKMK…ETQIKPYLQF (62 aa)) is the PWWP domain. Disordered stretches follow at residues 127–147 (VASG…NTTT) and 206–234 (MLDD…SSLD). The interval 274–566 (RNIKASQLKF…ASAVYVRARF (293 aa)) is dehydrogenase domain. Residues 284-298 (GFLG…IVKN) and lysine 518 contribute to the NAD(+) site.

This sequence belongs to the HIBADH-related family. NP60 subfamily. In terms of assembly, binds to mononucleosomes. Interacts with male-specific lethal (MSL) histone acetyltransferase complex at least composed of mof, msl-1, msl-2 and msl-3.

It is found in the chromosome. Its function is as follows. May have oxidoreductase activity. In Anopheles gambiae (African malaria mosquito), this protein is Cytokine-like nuclear factor N-PAC.